Here is a 582-residue protein sequence, read N- to C-terminus: Phosphoribosylaminoimidazole carboxylase (582 aa).

The ATP-grasp domain occupies 114–305; sequence KKYLAERGVA…QFENHLRAIL (192 aa). 143–200 contacts ATP; the sequence is AGRLGLPLMLKAKTLAYDGRGNSPLKSASSEDIQASLKFLGDRPLYAEGWAPFVKEVA.

The protein in the C-terminal section; belongs to the AIR carboxylase family. Class I subfamily.

The catalysed reaction is 5-amino-1-(5-phospho-D-ribosyl)imidazole-4-carboxylate + H(+) = 5-amino-1-(5-phospho-beta-D-ribosyl)imidazole + CO2. The protein operates within purine metabolism; IMP biosynthesis via de novo pathway; 5-amino-1-(5-phospho-D-ribosyl)imidazole-4-carboxylate from 5-amino-1-(5-phospho-D-ribosyl)imidazole (carboxylase route): step 1/1. The polypeptide is Phosphoribosylaminoimidazole carboxylase (ADE2) (Cryptococcus neoformans var. neoformans serotype D (strain B-3501A) (Filobasidiella neoformans)).